The chain runs to 515 residues: Fatty acyl-CoA reductase 1 (515 aa).

At 1-465 the chain is on the cytoplasmic side; it reads MLSIPEFYQG…ARKHLNKLRN (465 aa). The helical transmembrane segment at 466 to 484 threads the bilayer; it reads IRYGFNTILVVLIWRVFIA. The Peroxisomal segment spans residues 485 to 515; sequence RSQMARNIWYFVVSMCFKFLSYFRASSTMRY.

This sequence belongs to the fatty acyl-CoA reductase family.

It localises to the peroxisome membrane. The catalysed reaction is a long-chain fatty acyl-CoA + 2 NADPH + 2 H(+) = a long-chain primary fatty alcohol + 2 NADP(+) + CoA. It carries out the reaction hexadecanoyl-CoA + 2 NADPH + 2 H(+) = hexadecan-1-ol + 2 NADP(+) + CoA. It catalyses the reaction octadecanoyl-CoA + 2 NADPH + 2 H(+) = octadecan-1-ol + 2 NADP(+) + CoA. The enzyme catalyses (9Z)-octadecenoyl-CoA + 2 NADPH + 2 H(+) = (9Z)-octadecen-1-ol + 2 NADP(+) + CoA. The catalysed reaction is (9Z,12Z)-octadecadienoyl-CoA + 2 NADPH + 2 H(+) = (9Z,12Z)-octadecadien-1-ol + 2 NADP(+) + CoA. It carries out the reaction eicosanoyl-CoA + 2 NADPH + 2 H(+) = eicosan-1-ol + 2 NADP(+) + CoA. It catalyses the reaction 16-methylheptadecanoyl-CoA + 2 NADPH + 2 H(+) = 16-methylheptadecan-1-ol + 2 NADP(+) + CoA. The enzyme catalyses 18-methylnonadecanoyl-CoA + 2 NADPH + 2 H(+) = 18-methylnonadecan-1-ol + 2 NADP(+) + CoA. Its function is as follows. Catalyzes the reduction of saturated and unsaturated C16 or C18 fatty acyl-CoA to fatty alcohols. It plays an essential role in the production of ether lipids/plasmalogens which synthesis requires fatty alcohols. In parallel, it is also required for wax monoesters production since fatty alcohols also constitute a substrate for their synthesis. The chain is Fatty acyl-CoA reductase 1 (far1) from Xenopus laevis (African clawed frog).